The primary structure comprises 138 residues: Aspartate 1-decarboxylase (138 aa).

The active-site Schiff-base intermediate with substrate; via pyruvic acid is the serine 25. Pyruvic acid (Ser) is present on serine 25. Threonine 57 contributes to the substrate binding site. Tyrosine 58 acts as the Proton donor in catalysis. Glycine 73 to alanine 75 serves as a coordination point for substrate. The disordered stretch occupies residues valine 117–valine 138.

Belongs to the PanD family. Heterooctamer of four alpha and four beta subunits. Pyruvate serves as cofactor. Post-translationally, is synthesized initially as an inactive proenzyme, which is activated by self-cleavage at a specific serine bond to produce a beta-subunit with a hydroxyl group at its C-terminus and an alpha-subunit with a pyruvoyl group at its N-terminus.

It is found in the cytoplasm. It catalyses the reaction L-aspartate + H(+) = beta-alanine + CO2. The protein operates within cofactor biosynthesis; (R)-pantothenate biosynthesis; beta-alanine from L-aspartate: step 1/1. Its function is as follows. Catalyzes the pyruvoyl-dependent decarboxylation of aspartate to produce beta-alanine. In Clavibacter michiganensis subsp. michiganensis (strain NCPPB 382), this protein is Aspartate 1-decarboxylase.